The sequence spans 392 residues: MGFHTKSPDRVTHEEEANIGVDNQPRETTSTSLNRSQIIKTRNWWICIFVCSCLVVAGRVLSTLLLNFYFIQTGRDVCDDPKQFKGTWLQSMVQNAAFPFTAFLLLLWRSSFSTHSETSSSSSSFGKLFLLYISLGVLFAAYSQLYAIGRTHCVFFLWIFTSQLIFTSIFTTIINKQKFNRWIILSMVLSGAATGLGITSSGGAYIPCENEGSKMSNGAWCAFFGTVAFSLSLCIMQLGFQKVIPTTQSRVSAVILMQTNASMIATLICLVGLFVSGEFKDIKEDFETFKKGKPLYVLSLIGLSLAWQVMSLGLVGLVCLASSLFSNVVSFCSTPLVNILLVLAFRFTDADVKFFKEGALVAGILGFASYVYSLYKSTKKKEIASQSQTTRV.

Residues 1–16 (MGFHTKSPDRVTHEEE) show a composition bias toward basic and acidic residues. The disordered stretch occupies residues 1–29 (MGFHTKSPDRVTHEEEANIGVDNQPRETT). Position 30 is a phosphoserine (Ser-30). Helical transmembrane passes span 46–66 (ICIF…TLLL), 88–108 (WLQS…LLLW), 128–148 (LFLL…LYAI), 154–174 (VFFL…TTII), 182–202 (WIIL…TSSG), 220–240 (WCAF…QLGF), 254–274 (VILM…VGLF), 300–320 (LIGL…LVCL), 325–345 (FSNV…VLAF), and 354–374 (FFKE…VYSL).

Belongs to the purine permeases (TC 2.A.7.14) family.

It is found in the membrane. The sequence is that of Putative purine permease 19 (PUP19) from Arabidopsis thaliana (Mouse-ear cress).